We begin with the raw amino-acid sequence, 237 residues long: MTETKEEKVHKVFEKISPSYDRMNSVISFKLHVKWRKETMKLMRVQKGTNVLDVCCGTADWSIMMAEEIGPEGHVTGLDFSENMLKVGREKVKEADLHNVELIHGNAMELPFPDNSFDYVTIGFGLRNVPDYMQVLREMYRVLKPGGQLACIDTSQPNIPGWKQVFNAYFRYVMPVFGKFFAKSYKEYSWLQESTREFPGMARLAEMFQEAGFSYVRYISHSGGASATHFGFKKKEQ.

S-adenosyl-L-methionine contacts are provided by residues Thr-58, Asp-79, and 106 to 107 (NA).

The protein belongs to the class I-like SAM-binding methyltransferase superfamily. MenG/UbiE family.

It catalyses the reaction a 2-demethylmenaquinol + S-adenosyl-L-methionine = a menaquinol + S-adenosyl-L-homocysteine + H(+). Its pathway is quinol/quinone metabolism; menaquinone biosynthesis; menaquinol from 1,4-dihydroxy-2-naphthoate: step 2/2. Its function is as follows. Methyltransferase required for the conversion of demethylmenaquinol (DMKH2) to menaquinol (MKH2). This is Demethylmenaquinone methyltransferase from Listeria innocua serovar 6a (strain ATCC BAA-680 / CLIP 11262).